Here is a 121-residue protein sequence, read N- to C-terminus: Small ribosomal subunit protein uS13 (121 aa).

Residues 94-121 (GLPVRGQRTRTNARTRKGKRKTVAGKKK) are disordered.

The protein belongs to the universal ribosomal protein uS13 family. In terms of assembly, part of the 30S ribosomal subunit. Forms a loose heterodimer with protein S19. Forms two bridges to the 50S subunit in the 70S ribosome.

Its function is as follows. Located at the top of the head of the 30S subunit, it contacts several helices of the 16S rRNA. In the 70S ribosome it contacts the 23S rRNA (bridge B1a) and protein L5 of the 50S subunit (bridge B1b), connecting the 2 subunits; these bridges are implicated in subunit movement. Contacts the tRNAs in the A and P-sites. In Treponema pallidum (strain Nichols), this protein is Small ribosomal subunit protein uS13.